The following is a 224-amino-acid chain: LexA repressor (224 aa).

Positions 41–61 (MREIGDAVGLSSLSSVTHQLN) form a DNA-binding region, H-T-H motif. Catalysis depends on for autocatalytic cleavage activity residues Ser148 and Lys185.

It belongs to the peptidase S24 family. In terms of assembly, homodimer.

The catalysed reaction is Hydrolysis of Ala-|-Gly bond in repressor LexA.. In terms of biological role, represses a number of genes involved in the response to DNA damage (SOS response), including recA and lexA. In the presence of single-stranded DNA, RecA interacts with LexA causing an autocatalytic cleavage which disrupts the DNA-binding part of LexA, leading to derepression of the SOS regulon and eventually DNA repair. The polypeptide is LexA repressor (Leifsonia xyli subsp. xyli (strain CTCB07)).